The chain runs to 955 residues: Anoctamin-4 (955 aa).

Residues 1-352 (MEASSSGITN…FGEKIGLYFA (352 aa)) lie on the Extracellular side of the membrane. The segment at 72–100 (CKDDDSLLHPGNLTSTSDDASRLEAGGET) is disordered. N-linked (GlcNAc...) asparagine glycans are attached at residues N83, N105, N257, and N288. The chain crosses the membrane as a helical span at residues 353–373 (WLGWYTGMLFPAAFIGLFVFL). Residues 374 to 424 (YGVTTLDHSQVSKEVCQATDIIMCPVCDKYCPFMRLSDSCVYAKVTHLFDN) are Cytoplasmic-facing. The chain crosses the membrane as a helical span at residues 425 to 445 (GATVFFAVFMAVWATVFLEFW). The Extracellular segment spans residues 446–505 (KRRRAVIAYDWDLIDWEEEEEEIRPQFEAKYSKKERMNPISGKPEPYQAFTDKCSRLIVS). Residues 506 to 526 (ASGIFFMICVVIAAVFGIVIY) traverse the membrane as a helical segment. At 527–547 (RVVTVSTFAAFKWALIRNNSQ) the chain is on the cytoplasmic side. The helical transmembrane segment at 548-568 (VATTGTAVCINFCIIMLLNVL) threads the bilayer. The Extracellular segment spans residues 569–595 (YEKVALLLTNLEQPRTESEWENSFTLK). A helical membrane pass occupies residues 596-616 (MFLFQFVNLNSSTFYIAFFLG). At 617–715 (RFTGHPGAYL…AYGLFDEYLE (99 aa)) the chain is on the cytoplasmic side. Residues 716 to 736 (MILQFGFTTIFVAAFPLAPLL) form a helical membrane-spanning segment. Residues 737 to 768 (ALLNNIIEIRLDAYKFVTQWRRPLASRAKDIG) lie on the Extracellular side of the membrane. Residues 769–789 (IWYGILEGIGILSVITNAFVI) traverse the membrane as a helical segment. The Cytoplasmic portion of the chain corresponds to 790 to 885 (AITSDFIPRL…QFWHVLAARL (96 aa)). Residues 886–906 (AFIIVFEHLVFCIKHLISYLI) form a helical membrane-spanning segment. Topologically, residues 907–955 (PDLPKDLRDRMRREKYLIQEMMYEAELERLQKERKERKKNGKAHHNEWP) are extracellular.

It belongs to the anoctamin family.

The protein localises to the cell membrane. The enzyme catalyses a 1,2-diacyl-sn-glycero-3-phospho-L-serine(in) = a 1,2-diacyl-sn-glycero-3-phospho-L-serine(out). The catalysed reaction is a beta-D-galactosyl-(1&lt;-&gt;1')-N-acylsphing-4-enine(out) = a beta-D-galactosyl-(1&lt;-&gt;1')-N-acylsphing-4-enine(in). It catalyses the reaction a 1,2-diacyl-sn-glycero-3-phosphocholine(in) = a 1,2-diacyl-sn-glycero-3-phosphocholine(out). Has calcium-dependent phospholipid scramblase activity; scrambles phosphatidylserine, phosphatidylcholine and galactosylceramide. Does not exhibit calcium-activated chloride channel (CaCC) activity. The sequence is that of Anoctamin-4 (ANO4) from Homo sapiens (Human).